Here is a 610-residue protein sequence, read N- to C-terminus: Zinc metalloproteinase-disintegrin-like 4a (610 aa).

The signal sequence occupies residues 1 to 20 (MIQVLLVTISLAVFPYQGSS). The propeptide occupies 21 to 189 (VILESGNVND…KKASQSNLTP (169 aa)). One can recognise a Peptidase M12B domain in the interval 199-395 (KYVKLFLVAD…NMPQCILKKP (197 aa)). Asn218 carries N-linked (GlcNAc...) asparagine glycosylation. Asp286 contributes to the Ca(2+) binding site. 3 cysteine pairs are disulfide-bonded: Cys310–Cys390, Cys350–Cys374, and Cys352–Cys357. His335 serves as a coordination point for Zn(2+). The active site involves Glu336. Zn(2+)-binding residues include His339 and His345. Positions 390, 405, 408, 410, 412, 415, and 418 each coordinate Ca(2+). The 86-residue stretch at 403 to 488 (PAVCGNYFVE…AECTDSFQRN (86 aa)) folds into the Disintegrin domain. Disulfide bonds link Cys406/Cys435, Cys417/Cys430, Cys419/Cys425, Cys429/Cys452, Cys443/Cys449, Cys448/Cys474, Cys461/Cys481, Cys468/Cys499, Cys492/Cys504, Cys511/Cys561, Cys526/Cys572, Cys539/Cys549, Cys556/Cys598, and Cys592/Cys603. The short motif at 467 to 469 (ECD) is the D/ECD-tripeptide element.

Belongs to the venom metalloproteinase (M12B) family. P-III subfamily. Zn(2+) is required as a cofactor. In terms of tissue distribution, expressed by the venom gland.

It localises to the secreted. In terms of biological role, snake venom metalloproteinase that impairs hemostasis in the envenomed animal. The protein is Zinc metalloproteinase-disintegrin-like 4a of Crotalus adamanteus (Eastern diamondback rattlesnake).